The chain runs to 662 residues: MTENKTFYITTPIYYPSGKLHLGSSYTTIACDVLARYKRLMGFDTFYLTGLDEHGMKIQRKAEELGMTPKEYLDPMAADVQELWKKLDISYDKFIRTTDTYHEEAVAKAFEQLLEQDDIYLGKYAGWYSVSDEEFFTETQLEEIFRDESGNITGGIAPSGHEVEWVEEETYFFRMGKYADWLLQYYDEHPDFIQPEVRKNEMVNNFIKPGLEDLALTRTSFTWGIPVPSNPKHVVYVWFDALLNYITALGYNSDNDSNFKKYWPGINMVGKEIVRFHTIYWPIMLHALGLPAPKKIFAHGWLLMKDGKMSKSKGNVVYPEMLIERYGLDAVRYYLMRAISFGQDGIFTPEDFVGRINFDLANDLGNLLNRTVSMINKYNDGKIEATGVSTEFDASLEEVVEETISHFHKAMDKFEFNVALADVWTLISRTNKYIDETAPWVLAKSEDDKAKLNNVLYHLAENLRIAGALLQPFMRATSGKIFEQLGMDERSFSLENLSFGYSFTHPVVAKGQPIFPRLDVEEEVAYIKLQMAGGVLPEKEWVPEEVELNLTLPQIKFDDFEKIELKVAEVLEVEPVEGSDKLLRFKLDAGDSEPRQILSGIAQFYPNEQELVGKKLQIVANLKPRKMMKKYVSQGMILSAEFDGKLSVLTVDDDVPAGSLIG.

Residues 14 to 24 carry the 'HIGH' region motif; it reads YYPSGKLHLGS. Residues 308–312 carry the 'KMSKS' region motif; the sequence is KMSKS. Lysine 311 provides a ligand contact to ATP. Residues 559–662 enclose the tRNA-binding domain; the sequence is DFEKIELKVA…DDVPAGSLIG (104 aa).

It belongs to the class-I aminoacyl-tRNA synthetase family. MetG type 2B subfamily. Homodimer.

It localises to the cytoplasm. The enzyme catalyses tRNA(Met) + L-methionine + ATP = L-methionyl-tRNA(Met) + AMP + diphosphate. Functionally, is required not only for elongation of protein synthesis but also for the initiation of all mRNA translation through initiator tRNA(fMet) aminoacylation. In Lactococcus lactis subsp. lactis (strain IL1403) (Streptococcus lactis), this protein is Methionine--tRNA ligase (metG).